The following is a 204-amino-acid chain: MFVTAAYAQSSTTEGAEAHDAAAAGEVHTETGVAHEADHGAGVFPPFDTTHFASQLLWLAITFGLFYLLMSKVIIPRIGGILETRHDRIAQDLDEASRLKGEADAAIAAYEQELAGARAKGHSIADTAREAAKAKAKADRDGVEAGLAKKIAAAEARIADIKSKALADVGAIAEETATAVVKQLIGGTVTKAEIAAAFKASAGN.

The interval 8-28 (AQSSTTEGAEAHDAAAAGEVH) is disordered. A helical transmembrane segment spans residues 56–76 (LLWLAITFGLFYLLMSKVIIP).

It belongs to the ATPase B chain family. In terms of assembly, F-type ATPases have 2 components, F(1) - the catalytic core - and F(0) - the membrane proton channel. F(1) has five subunits: alpha(3), beta(3), gamma(1), delta(1), epsilon(1). F(0) has three main subunits: a(1), b(2) and c(10-14). The alpha and beta chains form an alternating ring which encloses part of the gamma chain. F(1) is attached to F(0) by a central stalk formed by the gamma and epsilon chains, while a peripheral stalk is formed by the delta and b chains.

The protein resides in the cell inner membrane. Functionally, f(1)F(0) ATP synthase produces ATP from ADP in the presence of a proton or sodium gradient. F-type ATPases consist of two structural domains, F(1) containing the extramembraneous catalytic core and F(0) containing the membrane proton channel, linked together by a central stalk and a peripheral stalk. During catalysis, ATP synthesis in the catalytic domain of F(1) is coupled via a rotary mechanism of the central stalk subunits to proton translocation. Its function is as follows. Component of the F(0) channel, it forms part of the peripheral stalk, linking F(1) to F(0). The b'-subunit is a diverged and duplicated form of b found in plants and photosynthetic bacteria. This Rhizobium meliloti (strain 1021) (Ensifer meliloti) protein is ATP synthase subunit b 2 (atpF2).